The chain runs to 685 residues: MGKRNKKVTQGKRAYNDKSEIVLENKQFEGYYKKQNLFRGKPNDEFDSFMEYMRKPLPTTFRICGYRHHAFELKNHFEKYYVPSLKNVVHEGQTIPPPTVLPWYPDGLAYIVDAQKDVIRKSPPLKRLQRFLVSENEAGNINRQEAVSMLPPLFLDVEPHHVILDMCAAPGSKTAQLIEAVYKKANIKDAAHDSKNLKSVEGLVIANDADPKRAQMLVHQINRLNSPNILVVNHDASTMPNIYVKGSSPSDGLNVIEEKKILKFDRILADVPCSGDGTFRKNLSLWREWSANSAFSLHPLQLRILIRGLQLLKVGGCLVYSTCSINPIENEAVVTAALKATGGAVSLVDVSKKLPLLKRDPGLLSWKVLDDSLNEFQSPAENTNDKIELTESMWPLPEEEMSKLHIERCARLYPHMQNTGGFFVAVLQKTDPINSRSFDPKKYTASMEILPPENKRQRTEKGVDEASNSTLTKSGNSYFDEEPFVYINPDDTSIKTIVDFYGIDPSFPRDQFFVRNQSGIPVRSIYFACSLFKEIIEANTNRVKFVHGGVRFFVKQEISQLLKDFSLKANKDICNFRIHSNGVNIISPFLNEKHFYDAGLKDLKILVKNEYPHVEQFSESGMLKKEFEKMPLGCNILRVDAQTKDGALMDMLILQPIWRSPTSCNLMLARKEKQNLSLELFGMDV.

S-adenosyl-L-methionine-binding positions include 167–173, Asp208, Asp235, and Asp270; that span reads CAAPGSK. The active-site Nucleophile is the Cys323.

This sequence belongs to the class I-like SAM-binding methyltransferase superfamily. RsmB/NOP family. TRM4 subfamily.

It is found in the nucleus. It catalyses the reaction cytidine(49) in tRNA precursor + S-adenosyl-L-methionine = 5-methylcytidine(49) in tRNA precursor + S-adenosyl-L-homocysteine + H(+). The enzyme catalyses cytidine(50) in tRNA + S-adenosyl-L-methionine = 5-methylcytidine(50) in tRNA + S-adenosyl-L-homocysteine + H(+). The catalysed reaction is cytidine(60) in tRNA(Asp) + S-adenosyl-L-methionine = 5-methylcytidine(60) in tRNA(Asp) + S-adenosyl-L-homocysteine + H(+). It carries out the reaction cytidine(61) in tRNA(Asp) + S-adenosyl-L-methionine = 5-methylcytidine(61) in tRNA(Asp) + S-adenosyl-L-homocysteine + H(+). It catalyses the reaction cytidine(62) in tRNA(Asp) + S-adenosyl-L-methionine = 5-methylcytidine(62) in tRNA(Asp) + S-adenosyl-L-homocysteine + H(+). Functionally, tRNA cytosine C(5)-methyltransferase that methylates cytosine to 5-methylcytosine (m5C) in tRNAs at position 49 and 50. Trm4a and trm4b methylate different sets of tRNAs. Also methylates cytosine to m5C at positions (60, 61 and 62) in tRNA(Asp). This Schizosaccharomyces pombe (strain 972 / ATCC 24843) (Fission yeast) protein is Multisite-specific tRNA:(cytosine-C(5))-methyltransferase trm4b.